A 202-amino-acid chain; its full sequence is CASP-like protein 2B1 (202 aa).

Residues 1–29 (MSYLGVGVSPGNVPVYHGTNLKVVDRRVR) are Cytoplasmic-facing. Residues 30–50 (LAELVLRCVICGLGILAAVLV) form a helical membrane-spanning segment. The Extracellular portion of the chain corresponds to 51–72 (GTDTQVKVIFTIQKKAKFTDMK). Residues 73–93 (ALVFLVIANGIAAAYSLIQGL) traverse the membrane as a helical segment. At 94-109 (RCVVSMVRGSVLFSKP) the chain is on the cytoplasmic side. Residues 110 to 130 (LAWAIFSGDQVIAYLTLAAVA) form a helical membrane-spanning segment. Over 131-164 (AAAQSSVFGEFGQPELQWMKICNMYGKFCNQVGE) the chain is Extracellular. The helical transmembrane segment at 165 to 185 (GIVSAVGVSLSMVILSGISAF) threads the bilayer. Residues 186 to 202 (SLFRLYGGNKGTSGGRW) are Cytoplasmic-facing.

Belongs to the Casparian strip membrane proteins (CASP) family. In terms of assembly, homodimer and heterodimers.

It is found in the cell membrane. The polypeptide is CASP-like protein 2B1 (Vitis vinifera (Grape)).